The sequence spans 1528 residues: MYPGSSQSRPYQVPPPPPMSPPLSQMHQQMSFVPPPPPPLNRYQTTPNLGASAPPPPPPGPPPASALNPQAPWNGAWGGVPAPRQAYDNRSGMYAQAPIQQYNPQAHAATAPGLNIPPPPLQTDAPMSDTYNPGQDPMFDGFMPDLSFDLEQETMGSSQTWQTTSSSSTNTASVNDNVQSNAPTEERTRRNNSASITGTQSSSNVPGIPSDITASWSLDKVIAWLQMNSFSRDWQETFKSLNIHGAQFLELGSGHFGRGNFGMMHQQVYPKLAKVCTASGTGWDQPREREEGKRMRRLIRGLVHARAVPDSARVPSSHGRQGSINSRGNDKGTHDGSDSPNTPSSQSRSTTIPTFPDGSSFSNHRGVLKNIDIDRHSSPKLNGDSPAASPNPVMASSTPKSSTLSVSPHSSRFGNNVRNSTDSVKAIYGSGIPADAQKMMSNSNLDELINGRGARQSPSDLGDNSAGTDSPVSARDTKLPFRQRMQAKDIDGNLSSPNGEGSLSPQMYRNGLGLDDYLRFKKPGGSIYLMATADGWNYRVVDVTDVETVLDLRSEISRGLGIPDEDGVEFYLTELGKSDHSQPLDDNQLMNHNKSRADAEGTLKLFVKPPPMSQQSTWSAGDTGQRHRFGTSSSMSRQQNTLKDDQSEEARLRAQREYKAEIDRKGREYLAIRKAKLESNNNGLSSSTEGIGIVGKPVDFDTPRHSPYEDKNTDRMFPTRNAPAPPVAPSATLNRVNSLMTGQRRVQGSMDGYPSQRVPPGVGTTTSPKEMSEDRRRQPMSGSQPMGGITSALVDMGRNLGGVALPNRGVSANNVPSKPSPPYRVATAPVSGRDFVSPDNRAAFPRSQTAGDLSPISQMPANFAAYQEPNPSPRGFGAAPVSSAAHKRAPSGPDIDFTEPEVSFDRPAPSTAQNEAQSDDDSGDDSDDGLFVIPIAARKASMKKAKSRASVTFDASDSGDGKRPALTVNTARDRKSVSFNSPQSARTGDDDDDSGRQRRTPKSDMWDSEDGKLGRRKSFKMDVWANRPPAEALINNLEDFFPGMDVDQPVLEEGDQEQNIDGSPVAPSPIAEVDETQSPGHLQINATPLNSLPPSRVQSMYNESDTLGSDESTLKALERPPSFQSLAQRSVRRSGGLGRMKSIREKARGAHEAHKRYTQTSMAAPQGLSRSGGTPATETQPTQNNSSALLRRKSTKMFNANIVQIRPNRDSMLVPDIPQDSISSSSRGAPKHPTTFRWFKGQLIGKGTYGRVYLGMNATTGEFLAVKEVEVNPRAAAGDKKRMKELVAALDQEIETMQHLDHVNIVQYLGCERKETSISIFLEYISGGSIGSCLRKNGKFEESVVQSLTRQTLSGLAYLHREGILHRDLKADNILLDVDGTAKISDFGISKKTDNIYGNDKSNSMQGSVFWMAPEVIRSQGEGYSAKVDIWSLGCVVLEMFAGRRPWAKEEAVGAIYKIANGEIPPIPEDVQDTISPIAVAFMMDCFTVDSHDRPTANKLLSQHPFCELDPNYNFLDSELYAKIRGTY.

Low complexity predominate over residues 1–11 (MYPGSSQSRPY). 10 disordered regions span residues 1-84 (MYPG…PAPR), 109-208 (ATAP…VPGI), 303-418 (VHAR…NNVR), 449-481 (INGR…KLPF), 607-652 (VKPP…EARL), 695-731 (GKPV…APSA), 746-786 (VQGS…SQPM), 811-929 (SANN…SDDG), 943-1012 (KKAK…EDGK), and 1086-1191 (ATPL…ALLR). Residues 12-21 (QVPPPPPMSP) are compositionally biased toward pro residues. Positions 22–31 (PLSQMHQQMS) are enriched in low complexity. Positions 53–64 (APPPPPPGPPPA) are enriched in pro residues. The segment covering 157-173 (SSQTWQTTSSSSTNTAS) has biased composition (low complexity). Composition is skewed to polar residues over residues 174 to 183 (VNDNVQSNAP), 191 to 205 (NNSA…SSNV), and 318 to 327 (HGRQGSINSR). Residues 328–337 (GNDKGTHDGS) are compositionally biased toward basic and acidic residues. A compositionally biased stretch (polar residues) spans 338–363 (DSPNTPSSQSRSTTIPTFPDGSSFSN). The span at 396 to 408 (SSTPKSSTLSVSP) shows a compositional bias: low complexity. Polar residues predominate over residues 409–418 (HSSRFGNNVR). Polar residues-rich tracts occupy residues 613 to 622 (SQQSTWSAGD) and 630 to 641 (GTSSSMSRQQNT). Basic and acidic residues-rich tracts occupy residues 642–652 (LKDDQSEEARL) and 698–714 (VDFD…KNTD). Residues 846–860 (RSQTAGDLSPISQMP) are compositionally biased toward polar residues. Positions 917 to 928 (QSDDDSGDDSDD) are enriched in acidic residues. A compositionally biased stretch (polar residues) spans 977-986 (VSFNSPQSAR). Over residues 1001–1012 (PKSDMWDSEDGK) the composition is skewed to basic and acidic residues. Over residues 1086-1111 (ATPLNSLPPSRVQSMYNESDTLGSDE) the composition is skewed to polar residues. Residues 1142 to 1152 (SIREKARGAHE) are compositionally biased toward basic and acidic residues. Positions 1158 to 1188 (TQTSMAAPQGLSRSGGTPATETQPTQNNSSA) are enriched in polar residues. Positions 1238-1507 (WFKGQLIGKG…NKLLSQHPFC (270 aa)) constitute a Protein kinase domain. ATP contacts are provided by residues 1244–1252 (IGKGTYGRV) and Lys1267.

This sequence belongs to the protein kinase superfamily. STE Ser/Thr protein kinase family. MAP kinase kinase kinase subfamily. As to quaternary structure, interacts with the adapter protein MST50 and MIP11.

The enzyme catalyses L-seryl-[protein] + ATP = O-phospho-L-seryl-[protein] + ADP + H(+). The catalysed reaction is L-threonyl-[protein] + ATP = O-phospho-L-threonyl-[protein] + ADP + H(+). Functionally, mitogen-activated protein kinase kinase kinase; part of the MCK1-MKK2-MPS1 MAP kinase (MAPK) signal transduction cascade that is essential for appressorium formation, penetration and invasive growth. Beside its role in pathogenesis, the MPS1 cascade is active in conidiation and cellular stress responses. Targets downstream of the the MPS1-MAPK pathway include transcription factors MIG1 and SWI6, as well as GSK1 and MPG1. The polypeptide is Mitogen-activated protein kinase kinae kinase MCK1 (Pyricularia oryzae (strain 70-15 / ATCC MYA-4617 / FGSC 8958) (Rice blast fungus)).